We begin with the raw amino-acid sequence, 198 residues long: MKKFLFSLCLLSSTVLASPQSELTERLNQNAGFEAGFTQKVLSPEGDVLMQGEGDVKILRPNLFRWHTQTPDENLLVTDGNTLWYYNPFVEQVTLMGLEKATTQTPFVLLTRNKASDWDNYSVSQNGDAFTVSPKADSAVKSEFIVRIQENGKVTGFSVVEQDGQRSDFDFTKFEAKKPAKNNFTFAIPDGVDIDDQR.

The signal sequence occupies residues 1 to 17 (MKKFLFSLCLLSSTVLA).

Belongs to the LolA family. Monomer.

Its subcellular location is the periplasm. Functionally, participates in the translocation of lipoproteins from the inner membrane to the outer membrane. Only forms a complex with a lipoprotein if the residue after the N-terminal Cys is not an aspartate (The Asp acts as a targeting signal to indicate that the lipoprotein should stay in the inner membrane). The chain is Outer-membrane lipoprotein carrier protein from Aliivibrio fischeri (strain MJ11) (Vibrio fischeri).